Consider the following 163-residue polypeptide: R-phycoerythrin alpha chain (163 aa).

(2R,3E)-phycoerythrobilin is bound by residues Cys-82 and Cys-139.

This sequence belongs to the phycobiliprotein family. In terms of assembly, heterodimer of an alpha and a beta chain. Contains two covalently linked bilin chromophores.

It localises to the plastid. Its subcellular location is the chloroplast thylakoid membrane. Light-harvesting photosynthetic bile pigment-protein from the phycobiliprotein complex. The protein is R-phycoerythrin alpha chain (cpeA) of Aglaothamnion neglectum (Red alga).